The sequence spans 283 residues: Putative pyruvate, phosphate dikinase regulatory protein (283 aa).

156 to 163 (GLSRAGKT) contributes to the ADP binding site.

Belongs to the pyruvate, phosphate/water dikinase regulatory protein family. PDRP subfamily.

It carries out the reaction N(tele)-phospho-L-histidyl/L-threonyl-[pyruvate, phosphate dikinase] + ADP = N(tele)-phospho-L-histidyl/O-phospho-L-threonyl-[pyruvate, phosphate dikinase] + AMP + H(+). The enzyme catalyses N(tele)-phospho-L-histidyl/O-phospho-L-threonyl-[pyruvate, phosphate dikinase] + phosphate + H(+) = N(tele)-phospho-L-histidyl/L-threonyl-[pyruvate, phosphate dikinase] + diphosphate. In terms of biological role, bifunctional serine/threonine kinase and phosphorylase involved in the regulation of the pyruvate, phosphate dikinase (PPDK) by catalyzing its phosphorylation/dephosphorylation. The sequence is that of Putative pyruvate, phosphate dikinase regulatory protein from Desulfotalea psychrophila (strain LSv54 / DSM 12343).